Reading from the N-terminus, the 64-residue chain is Probable tautomerase lp_1712 (64 aa).

The Proton acceptor; via imino nitrogen role is filled by Pro-2.

The protein belongs to the 4-oxalocrotonate tautomerase family.

This Lactiplantibacillus plantarum (strain ATCC BAA-793 / NCIMB 8826 / WCFS1) (Lactobacillus plantarum) protein is Probable tautomerase lp_1712.